We begin with the raw amino-acid sequence, 215 residues long: MLQVYLVRHGETQWNAERRIQGQSDSPLTAHGERQAWQVGERARTLGITHIITSDLGRTRRTAEIIAEACGCSVIADARLRELDMGVLEKRHIDSLSDEEEGWRRQLVNGTPDGRIPQGESMQELSERMHAALASCLELPAGSRPLLVSHGIALGCLVSTILGLPAYAERRLRLRNCSISRVDYQQSPWLASGWVVETAGDVSHLDAPAMDELQR.

Substrate is bound by residues 8-15 (RHGETQWN), 21-22 (QG), Arg-58, Arg-60, 82-85 (ELDM), 104-105 (RR), and 151-152 (GI). Catalysis depends on His-9, which acts as the Tele-phosphohistidine intermediate. Residue Glu-82 is the Proton donor/acceptor of the active site.

The protein belongs to the phosphoglycerate mutase family. GpmB subfamily.

The catalysed reaction is (2R)-2-phosphoglycerate = (2R)-3-phosphoglycerate. It participates in carbohydrate degradation; glycolysis; pyruvate from D-glyceraldehyde 3-phosphate: step 3/5. In Klebsiella pneumoniae (strain 342), this protein is Probable phosphoglycerate mutase GpmB.